We begin with the raw amino-acid sequence, 190 residues long: Syndecan-2-B (190 aa).

Positions 1–22 (MRNVWLIVPFALLAAFSGETWA) are cleaved as a signal peptide. At 23-136 (QADRDLYIDS…NLFHRTEVLA (114 aa)) the chain is on the extracellular side. A disordered region spans residues 34-60 (ESSGNYPVDDDDYSSGSGSGIPAHDDD). Ser36, Ser48, Ser50, and Ser52 each carry an O-linked (Xyl...) (glycosaminoglycan) serine glycan. A helical membrane pass occupies residues 137 to 157 (AVIAGGGIGFLFAVFLILLLV). At 158 to 190 (YRMRKKDEGSYDLGERKPSSAVYQKAPTKEFYA) the chain is on the cytoplasmic side. The tract at residues 167–190 (SYDLGERKPSSAVYQKAPTKEFYA) is disordered.

Belongs to the syndecan proteoglycan family. In terms of processing, O-glycosylated; contains both heparan sulfate and chondroitin sulfate.

The protein localises to the membrane. Functionally, cell surface proteoglycan. The protein is Syndecan-2-B (sdc2-b) of Xenopus laevis (African clawed frog).